The chain runs to 131 residues: Histone H2A-beta (131 aa).

N-acetylserine is present on Ser2. Lys5 and Lys9 each carry N6-acetyllysine. Gln106 carries the post-translational modification N5-methylglutamine. A Phosphoserine modification is found at Ser128. Positions 128-129 (SQ) match the [ST]-Q motif motif.

The protein belongs to the histone H2A family. The nucleosome is a histone octamer containing two molecules each of H2A, H2B, H3 and H4 assembled in one H3-H4 heterotetramer and two H2A-H2B heterodimers. The octamer wraps approximately 147 bp of DNA. In terms of processing, phosphorylated to form H2AS128ph (gamma-H2A) in response to DNA double-strand breaks (DSBs) generated by exogenous genotoxic agents and by stalled replication forks. Phosphorylation is dependent on the DNA damage checkpoint kinases rad3/ATR and tel1/ATM, spreads on either side of a detected DSB site and may mark the surrounding chromatin for recruitment of proteins required for DNA damage signaling and repair. Gamma-H2A is required for recruiting crb2, a modulator of DNA damage checkpoint signaling, to DSB sites. Gamma-H2A is removed from the DNA prior to the strand invasion-primer extension step of the repair process and subsequently dephosphorylated. Dephosphorylation is necessary for efficient recovery from the DNA damage checkpoint. Post-translationally, acetylated by esa1 to form H2AK4ac and H2AK7ac.

It localises to the nucleus. The protein resides in the chromosome. In terms of biological role, core component of nucleosome which plays a central role in DNA double strand break (DSB) repair. Nucleosomes wrap and compact DNA into chromatin, limiting DNA accessibility to the cellular machineries which require DNA as a template. Histones thereby play a central role in transcription regulation, DNA repair, DNA replication and chromosomal stability. DNA accessibility is regulated via a complex set of post-translational modifications of histones, also called histone code, and nucleosome remodeling. This is Histone H2A-beta (hta2) from Schizosaccharomyces pombe (strain 972 / ATCC 24843) (Fission yeast).